The following is a 392-amino-acid chain: Galactose-1-phosphate uridylyltransferase (392 aa).

The Zn(2+) site is built by Cys-52 and Cys-55. UDP-alpha-D-glucose is bound by residues Ala-61 and 77–78; that span reads ND. His-126 provides a ligand contact to Zn(2+). Asn-194 serves as a coordination point for UDP-alpha-D-glucose. His-205 contacts Zn(2+). The active-site Tele-UMP-histidine intermediate is the His-207. Gln-209 provides a ligand contact to UDP-alpha-D-glucose. Glu-223, His-323, His-340, and His-342 together coordinate Fe cation. UDP-alpha-D-glucose-binding positions include 355–358 and 360–361; these read KFLV and YE.

The protein belongs to the galactose-1-phosphate uridylyltransferase type 1 family. As to quaternary structure, homodimer. Zn(2+) serves as cofactor.

It catalyses the reaction alpha-D-galactose 1-phosphate + UDP-alpha-D-glucose = alpha-D-glucose 1-phosphate + UDP-alpha-D-galactose. It functions in the pathway carbohydrate metabolism; galactose metabolism. The chain is Galactose-1-phosphate uridylyltransferase (gal-7) from Neurospora crassa (strain ATCC 24698 / 74-OR23-1A / CBS 708.71 / DSM 1257 / FGSC 987).